A 159-amino-acid polypeptide reads, in one-letter code: Cyclic pyranopterin monophosphate synthase (159 aa).

Residues 75–77 (LCH) and 113–114 (ME) each bind substrate. D128 is a catalytic residue.

It belongs to the MoaC family. Homohexamer; trimer of dimers.

The catalysed reaction is (8S)-3',8-cyclo-7,8-dihydroguanosine 5'-triphosphate = cyclic pyranopterin phosphate + diphosphate. It functions in the pathway cofactor biosynthesis; molybdopterin biosynthesis. Catalyzes the conversion of (8S)-3',8-cyclo-7,8-dihydroguanosine 5'-triphosphate to cyclic pyranopterin monophosphate (cPMP). The polypeptide is Cyclic pyranopterin monophosphate synthase (Thiobacillus denitrificans (strain ATCC 25259 / T1)).